The chain runs to 156 residues: 6,7-dimethyl-8-ribityllumazine synthase (156 aa).

5-amino-6-(D-ribitylamino)uracil-binding positions include Phe-25, Ala-59–Glu-61, and Ala-83–Ile-85. Residue Gly-88–Thr-89 coordinates (2S)-2-hydroxy-3-oxobutyl phosphate. His-91 serves as the catalytic Proton donor. Residue Phe-116 coordinates 5-amino-6-(D-ribitylamino)uracil. Arg-130 serves as a coordination point for (2S)-2-hydroxy-3-oxobutyl phosphate.

It belongs to the DMRL synthase family.

It carries out the reaction (2S)-2-hydroxy-3-oxobutyl phosphate + 5-amino-6-(D-ribitylamino)uracil = 6,7-dimethyl-8-(1-D-ribityl)lumazine + phosphate + 2 H2O + H(+). Its pathway is cofactor biosynthesis; riboflavin biosynthesis; riboflavin from 2-hydroxy-3-oxobutyl phosphate and 5-amino-6-(D-ribitylamino)uracil: step 1/2. Its function is as follows. Catalyzes the formation of 6,7-dimethyl-8-ribityllumazine by condensation of 5-amino-6-(D-ribitylamino)uracil with 3,4-dihydroxy-2-butanone 4-phosphate. This is the penultimate step in the biosynthesis of riboflavin. The chain is 6,7-dimethyl-8-ribityllumazine synthase from Desulfovibrio desulfuricans (strain ATCC 27774 / DSM 6949 / MB).